Here is a 278-residue protein sequence, read N- to C-terminus: MKIIILLGLIGATSSAPLITQRLLSASNSHELLLNLNNGQLLPLQFQSAFNSWIPPFPGLLQQQQQQAQVSGHPQFPLSTLESFAGLFPNQIPFSRQVGFAQGGQAGQPDFSQQQTPSQTQQASPMSYVVPVKVPQDQTQMFQYYPVYMLLPWEQPQQTVTSSPQQTGQQLYEEQIPFYNQFGFVPQQAEPGVPGGQQHLVLDSFVGTAPETPGMPAVEGPLYPQKEPIGFKQDNVGVSTPSTSPKPDTGNFFTSEINPTIAPLLPEQKVNADSLREP.

An N-terminal signal peptide occupies residues 1–15; it reads MKIIILLGLIGATSS. Residues 103–124 are disordered; the sequence is GGQAGQPDFSQQQTPSQTQQAS. Over residues 107–124 the composition is skewed to low complexity; it reads GQPDFSQQQTPSQTQQAS. O-linked (GalNAc...) threonine glycosylation is found at Thr-116 and Thr-120. Residues 126-128 are interaction with ARHGEF5; the sequence is MSY. Residues 230 to 278 are disordered; the sequence is GFKQDNVGVSTPSTSPKPDTGNFFTSEINPTIAPLLPEQKVNADSLREP. A compositionally biased stretch (polar residues) spans 236-258; the sequence is VGVSTPSTSPKPDTGNFFTSEIN. Thr-240, Thr-243, Thr-249, and Thr-254 each carry an O-linked (GalNAc...) threonine glycan.

It belongs to the ODAM family. Interacts (via C-terminus) with ARHGEF5. O-glycosylated. Highly expressed in tooth-associated epithelia. In tooth, it is only detected in the ameloblast layer of the enamel organ, starting at post-secretory transition and extending throughout the maturation stage. Also detected in epithelial cells of the gingiva which bind it to the tooth surface (junctional epithelium) (at protein level). Predominantly expressed in mandible, but also expressed at weak level in nasal and salivary glands, and at much lower level in epididymis.

The protein resides in the secreted. Its subcellular location is the cytoplasm. It is found in the nucleus. Functionally, tooth-associated epithelia protein that probably plays a role in odontogenesis, the complex process that results in the initiation and generation of the tooth. May be incorporated in the enamel matrix at the end of mineralization process. Involved in the induction of RHOA activity via interaction with ARHGEF and expression of downstream factors such as ROCK. Plays a role in attachment of the junctional epithelium to the tooth surface. This chain is Odontogenic ameloblast-associated protein (Odam), found in Rattus norvegicus (Rat).